A 484-amino-acid polypeptide reads, in one-letter code: UDP-glucose:undecaprenyl-phosphate glucose-1-phosphate transferase (484 aa).

5 consecutive transmembrane segments (helical) span residues 37 to 57 (MVVASGLIAYRIVFGTWVPAA), 59 to 79 (YRVAIATTLLYSVICFALFPL), 93 to 113 (VVLGGAFGGVFALFAVHALIV), 122 to 142 (GWVGLWFVGGLVSLVAARTLL), and 299 to 319 (ILAVIALMGLWPLMLAIAVGV).

Belongs to the bacterial sugar transferase family.

The protein localises to the cell inner membrane. It carries out the reaction di-trans,octa-cis-undecaprenyl phosphate + UDP-alpha-D-glucose = alpha-D-glucosyl di-trans,octa-cis-undecaprenyl diphosphate + UMP. The protein operates within glycan biosynthesis; xanthan biosynthesis. Functionally, is the initiating enzyme for the synthesis of the exopolysaccharide xanthan. Catalyzes the transfer of the glucose-1-phosphate moiety from UDP-Glc onto the carrier lipid undecaprenyl phosphate (C55-P), forming a phosphoanhydride bond yielding to glucosyl-pyrophosphoryl-undecaprenol (Glc-PP-C55). The polypeptide is UDP-glucose:undecaprenyl-phosphate glucose-1-phosphate transferase (gumD) (Xanthomonas campestris pv. campestris).